The sequence spans 246 residues: Caffeoyl-CoA O-methyltransferase 1 (246 aa).

K21 serves as a coordination point for substrate. S-adenosyl-L-methionine contacts are provided by residues T63, E85, 87-88 (GV), S93, D111, and A140. Residue D162 participates in substrate binding. D162 lines the a divalent metal cation pocket. D164 contributes to the S-adenosyl-L-methionine binding site. The a divalent metal cation site is built by D188 and N189. Residue N193 coordinates substrate.

The protein belongs to the class I-like SAM-binding methyltransferase superfamily. Cation-dependent O-methyltransferase family. CCoAMT subfamily. A divalent metal cation serves as cofactor.

It carries out the reaction (E)-caffeoyl-CoA + S-adenosyl-L-methionine = (E)-feruloyl-CoA + S-adenosyl-L-homocysteine + H(+). It participates in aromatic compound metabolism; phenylpropanoid biosynthesis. Its function is as follows. Methylates caffeoyl-CoA to feruloyl-CoA and 5-hydroxyferuloyl-CoA to sinapoyl-CoA. Plays a role in the synthesis of feruloylated polysaccharides. Involved in the reinforcement of the plant cell wall. Also involved in the responding to wounding or pathogen challenge by the increased formation of cell wall-bound ferulic acid polymers. The sequence is that of Caffeoyl-CoA O-methyltransferase 1 (CCOMT) from Eucalyptus globulus (Tasmanian blue gum).